A 953-amino-acid chain; its full sequence is Coatomer subunit beta (953 aa).

HEAT repeat units lie at residues 17 to 54, 96 to 131, 132 to 168, 240 to 276, 277 to 314, 316 to 353, and 396 to 433; these read DSEP…NGEK, QEMI…KEAE, LLEP…NFEH, SERA…SAPT, AIKA…HPSH, RVLQ…SRNV, and DMAA…RFDN.

Oligomeric complex that consists of at least the alpha, beta, beta', gamma, delta, epsilon and zeta subunits.

The protein localises to the cytoplasm. It is found in the golgi apparatus membrane. It localises to the cytoplasmic vesicle. The protein resides in the COPI-coated vesicle membrane. Its function is as follows. The coatomer is a cytosolic protein complex that binds to dilysine motifs and reversibly associates with Golgi non-clathrin-coated vesicles, which further mediate biosynthetic protein transport from the ER, via the Golgi up to the trans Golgi network. Coatomer complex is required for budding from Golgi membranes, and is essential for the retrograde Golgi-to-ER transport of dilysine-tagged proteins. The protein is Coatomer subunit beta (COPB1) of Gallus gallus (Chicken).